A 354-amino-acid polypeptide reads, in one-letter code: UDP-3-O-acylglucosamine N-acyltransferase (354 aa).

His258 acts as the Proton acceptor in catalysis.

This sequence belongs to the transferase hexapeptide repeat family. LpxD subfamily. As to quaternary structure, homotrimer.

It catalyses the reaction a UDP-3-O-[(3R)-3-hydroxyacyl]-alpha-D-glucosamine + a (3R)-hydroxyacyl-[ACP] = a UDP-2-N,3-O-bis[(3R)-3-hydroxyacyl]-alpha-D-glucosamine + holo-[ACP] + H(+). Its pathway is bacterial outer membrane biogenesis; LPS lipid A biosynthesis. Functionally, catalyzes the N-acylation of UDP-3-O-acylglucosamine using 3-hydroxyacyl-ACP as the acyl donor. Is involved in the biosynthesis of lipid A, a phosphorylated glycolipid that anchors the lipopolysaccharide to the outer membrane of the cell. In Sinorhizobium fredii (strain NBRC 101917 / NGR234), this protein is UDP-3-O-acylglucosamine N-acyltransferase.